The chain runs to 164 residues: Cyclic pyranopterin monophosphate synthase (164 aa).

Residues 75 to 77 (MCH) and 116 to 117 (ME) contribute to the substrate site. The active site involves Asp131.

The protein belongs to the MoaC family. Homohexamer; trimer of dimers.

The enzyme catalyses (8S)-3',8-cyclo-7,8-dihydroguanosine 5'-triphosphate = cyclic pyranopterin phosphate + diphosphate. It participates in cofactor biosynthesis; molybdopterin biosynthesis. Catalyzes the conversion of (8S)-3',8-cyclo-7,8-dihydroguanosine 5'-triphosphate to cyclic pyranopterin monophosphate (cPMP). The sequence is that of Cyclic pyranopterin monophosphate synthase from Staphylococcus aureus (strain USA300).